The following is a 198-amino-acid chain: Peptidyl-tRNA hydrolase (198 aa).

TRNA is bound at residue Tyr15. Residue His20 is the Proton acceptor of the active site. TRNA-binding residues include Phe66, Asn68, and Asn114.

Belongs to the PTH family. In terms of assembly, monomer.

The protein localises to the cytoplasm. It catalyses the reaction an N-acyl-L-alpha-aminoacyl-tRNA + H2O = an N-acyl-L-amino acid + a tRNA + H(+). Its function is as follows. Hydrolyzes ribosome-free peptidyl-tRNAs (with 1 or more amino acids incorporated), which drop off the ribosome during protein synthesis, or as a result of ribosome stalling. In terms of biological role, catalyzes the release of premature peptidyl moieties from peptidyl-tRNA molecules trapped in stalled 50S ribosomal subunits, and thus maintains levels of free tRNAs and 50S ribosomes. The sequence is that of Peptidyl-tRNA hydrolase from Cupriavidus metallidurans (strain ATCC 43123 / DSM 2839 / NBRC 102507 / CH34) (Ralstonia metallidurans).